The chain runs to 326 residues: GTP 3',8-cyclase (326 aa).

Positions 6–220 (SFGRRINYLR…DRISASYELE (215 aa)) constitute a Radical SAM core domain. Arg-15 serves as a coordination point for GTP. Residues Cys-22 and Cys-26 each contribute to the [4Fe-4S] cluster site. Position 28 (Tyr-28) interacts with S-adenosyl-L-methionine. Cys-29 is a [4Fe-4S] cluster binding site. Arg-65 is a binding site for GTP. Residue Gly-69 coordinates S-adenosyl-L-methionine. Thr-96 lines the GTP pocket. Ser-120 is a binding site for S-adenosyl-L-methionine. GTP is bound at residue Lys-157. Met-191 lines the S-adenosyl-L-methionine pocket. [4Fe-4S] cluster is bound by residues Cys-254 and Cys-257. GTP is bound at residue 259–261 (RVR). Cys-271 serves as a coordination point for [4Fe-4S] cluster.

This sequence belongs to the radical SAM superfamily. MoaA family. Monomer and homodimer. [4Fe-4S] cluster serves as cofactor.

The enzyme catalyses GTP + AH2 + S-adenosyl-L-methionine = (8S)-3',8-cyclo-7,8-dihydroguanosine 5'-triphosphate + 5'-deoxyadenosine + L-methionine + A + H(+). It functions in the pathway cofactor biosynthesis; molybdopterin biosynthesis. In terms of biological role, catalyzes the cyclization of GTP to (8S)-3',8-cyclo-7,8-dihydroguanosine 5'-triphosphate. In Geobacter sulfurreducens (strain ATCC 51573 / DSM 12127 / PCA), this protein is GTP 3',8-cyclase.